The chain runs to 62 residues: Large ribosomal subunit protein bL28 (62 aa).

This sequence belongs to the bacterial ribosomal protein bL28 family.

The protein is Large ribosomal subunit protein bL28 of Helicobacter pylori (strain HPAG1).